Reading from the N-terminus, the 739-residue chain is Poly(A) polymerase alpha (739 aa).

The segment covering 1 to 17 has biased composition (low complexity); that stretch reads MPFPVTTQGSQQTQPPQ. The disordered stretch occupies residues 1–23; that stretch reads MPFPVTTQGSQQTQPPQKHYGIT. 2 positions are modified to phosphoserine: Ser-10 and Ser-24. ATP-binding positions include 100-102, Thr-109, 113-115, Asp-167, Lys-228, Tyr-237, and 246-247; these read FGS, DID, and GV. 3 residues coordinate Mg(2+): Asp-113, Asp-115, and Asp-167. Glycyl lysine isopeptide (Lys-Gly) (interchain with G-Cter in SUMO) cross-links involve residues Lys-444, Lys-445, Lys-506, and Lys-507. Residues 490–507 carry the Nuclear localization signal 1 motif; the sequence is RKQLHQLLPSHVLQKKKK. Disordered stretches follow at residues 501–565 and 580–700; these read VLQK…AVTA and QINS…TIQT. The interval 508 to 643 is ser/Thr-rich; sequence HSTEGVKLTP…AKIPNPIVGV (136 aa). The span at 518–534 shows a compositional bias: low complexity; the sequence is LNDSSLDLSMDSDNSMS. The span at 535–557 shows a compositional bias: polar residues; it reads VPSPTSAMKTSPLNSSGSSQGRN. Phosphoserine; by MAPK is present on Ser-537. Ser-558 is subject to Phosphoserine. Residues 583–594 show a composition bias toward low complexity; the sequence is SSESSGGTSSES. Polar residues predominate over residues 595–604; the sequence is IPQTATQPAI. Low complexity predominate over residues 611 to 620; it reads TVSRVVSSTR. Residues Lys-635 and Lys-644 each carry the N6-acetyllysine modification. The Nuclear localization signal 2 motif lies at 644–659; it reads KRTSSPHKEESPKKTK. 2 stretches are compositionally biased toward basic and acidic residues: residues 649–660 and 676–686; these read PHKEESPKKTKT and GHDKTETKEQL. The required for interaction with NUDT21 stretch occupies residues 671–739; the sequence is CLALSGHDKT…KNSIKLRLNR (69 aa). A compositionally biased stretch (low complexity) spans 688 to 700; the sequence is TETSTTQSETIQT. Lys-730 carries the post-translational modification N6-acetyllysine; alternate. A Glycyl lysine isopeptide (Lys-Gly) (interchain with G-Cter in SUMO); alternate cross-link involves residue Lys-730. At Ser-732 the chain carries Phosphoserine. An N6-acetyllysine; alternate modification is found at Lys-734. Lys-734 participates in a covalent cross-link: Glycyl lysine isopeptide (Lys-Gly) (interchain with G-Cter in SUMO); alternate.

Belongs to the poly(A) polymerase family. In terms of assembly, monomer. Found in a complex with CPSF1, FIP1L1 and PAPOLA. Interacts with AHCYL1 and FIP1L1; the interaction with AHCYL1 seems to increase interaction with FIP1L1. Interacts with NUDT21; the interaction is diminished by acetylation. Interacts with KPNB1; the interaction promotes PAP nuclear import and is inhibited by acetylation of PAP. It depends on Mg(2+) as a cofactor. The cofactor is Mn(2+). Post-translationally, polysumoylated. Varying sumoylation depending on tissue- and cell-type. Highly sumoylated in bladder and NIH 3T3 cells. Sumoylation is required for nuclear localization and enhances PAP stability. Desumoylated by SENP1. Inhibits polymerase activity. Hyperphosphorylation on multiple CDK2 consensus and non-consensus sites in the C-terminal Ser/Thr-rich region represses PAP activity in late M-phase. Phosphorylation/dephosphorylation may regulate the interaction between PAP and CPSF. In terms of processing, acetylated in the C-terminus. Acetylation decreases interaction with NUDT21 and KPNB1, and inhibits nuclear localization through inhibiting binding to the importin alpha/beta complex.

The protein localises to the nucleus. The enzyme catalyses RNA(n) + ATP = RNA(n)-3'-adenine ribonucleotide + diphosphate. Its function is as follows. Polymerase that creates the 3'-poly(A) tail of mRNA's. Also required for the endoribonucleolytic cleavage reaction at some polyadenylation sites. May acquire specificity through interaction with a cleavage and polyadenylation specificity factor (CPSF) at its C-terminus. In Bos taurus (Bovine), this protein is Poly(A) polymerase alpha (PAPOLA).